Here is a 280-residue protein sequence, read N- to C-terminus: Equatorin (280 aa).

The signal sequence occupies residues 1–19 (MDFILLIFLSGVFLPNIFS). The Vesicular segment spans residues 20 to 183 (LQPTVEQDPG…LSELEEIKLK (164 aa)). Residues 112-131 (ATASGEEDKRSEPSRKSSTP) form a disordered region. A compositionally biased stretch (basic and acidic residues) spans 117–126 (EEDKRSEPSR). A glycan (N-linked (GlcNAc...) asparagine) is linked at Asn-145. Residues 184–204 (LMLGISLMTLILLIPLLIFCF) form a helical membrane-spanning segment. Residues 205 to 280 (ATLYKLRHLR…AEVTEERISE (76 aa)) are Cytoplasmic-facing. The residue at position 279 (Ser-279) is a Phosphoserine.

Interacts with SNAP25. Post-translationally, highly N- and O-glycosylated; contains sialic acid. As to expression, highly expressed in testis and epididymis. Low expression in other tissues.

It is found in the cytoplasmic vesicle. Its subcellular location is the secretory vesicle. The protein localises to the acrosome membrane. The protein resides in the acrosome inner membrane. It localises to the acrosome outer membrane. In terms of biological role, acrosomal membrane-anchored protein involved in the process of fertilization and in acrosome biogenesis. The chain is Equatorin (Eqtn) from Rattus norvegicus (Rat).